Here is a 141-residue protein sequence, read N- to C-terminus: Large ribosomal subunit protein uL11 (141 aa).

Belongs to the universal ribosomal protein uL11 family. Part of the ribosomal stalk of the 50S ribosomal subunit. Interacts with L10 and the large rRNA to form the base of the stalk. L10 forms an elongated spine to which L12 dimers bind in a sequential fashion forming a multimeric L10(L12)X complex. In terms of processing, one or more lysine residues are methylated.

Functionally, forms part of the ribosomal stalk which helps the ribosome interact with GTP-bound translation factors. The protein is Large ribosomal subunit protein uL11 of Chlorobium phaeobacteroides (strain DSM 266 / SMG 266 / 2430).